A 498-amino-acid polypeptide reads, in one-letter code: MSTNPTSSRPGVSTIDEKNTGRIDQIIGPVLDVTFPPGKLPYIYNALVVQSRDTADKQINVTCEVQQLLGNNRVRAVAMSATDGLMRGMEVIDTGAPLSVPVGGATLGRIFNVLGEPVDNLGPVDSSATFPIHRSAPAFIELDTKLSIFETGIKVVDLLAPYRRGGKIGLFGGAGVGKTVLIMELINNIAKAHGGVSVFGGVGERTREGNDLYMEMKESGVINEKNIEESKVALVYGQMNEPPGARMRVGLTALTMAEYFRDVNKQDVLLFIDNIFRFVQAGSEVSALLGRMPSAVGYQPTLSTEMGSLQERIASTKKGSITSIQAVYVPADDLTDPAPATTFAHLDATTVLSRGLASKGIYPAVDPLDSTSTMLQPRIVGNEHYETAQRVKETLQRYKELQDIIAILGLDELSEEDRLTVARARKIERFLSQPFFVAEVFTGSPGKYVGLAETIRGFQLILSGELDGLPEQAFYLVGNIDEASTKAITLEEENKSKK.

Residue 172–179 (GGAGVGKT) coordinates ATP.

Belongs to the ATPase alpha/beta chains family. In terms of assembly, F-type ATPases have 2 components, CF(1) - the catalytic core - and CF(0) - the membrane proton channel. CF(1) has five subunits: alpha(3), beta(3), gamma(1), delta(1), epsilon(1). CF(0) has four main subunits: a(1), b(1), b'(1) and c(9-12).

It localises to the plastid. The protein localises to the chloroplast thylakoid membrane. The catalysed reaction is ATP + H2O + 4 H(+)(in) = ADP + phosphate + 5 H(+)(out). In terms of biological role, produces ATP from ADP in the presence of a proton gradient across the membrane. The catalytic sites are hosted primarily by the beta subunits. In Agrostis stolonifera (Creeping bentgrass), this protein is ATP synthase subunit beta, chloroplastic.